The following is a 297-amino-acid chain: uncharacterized protein (297 aa).

Residues 187-285 form the HTH araC/xylS-type domain; it reads EKLIATLHAS…GYAPSAVLKN (99 aa). DNA-binding regions (H-T-H motif) lie at residues 204–225 and 252–275; these read ADMA…LRYT and VGEV…KHKF.

This is an uncharacterized protein from Escherichia coli (strain K12).